We begin with the raw amino-acid sequence, 138 residues long: Large-conductance mechanosensitive channel (138 aa).

Transmembrane regions (helical) follow at residues 19 to 39 (VGVI…GDVI) and 81 to 101 (GSFL…FLVI).

Belongs to the MscL family. Homopentamer.

The protein resides in the cell inner membrane. Its function is as follows. Channel that opens in response to stretch forces in the membrane lipid bilayer. May participate in the regulation of osmotic pressure changes within the cell. This is Large-conductance mechanosensitive channel from Bradyrhizobium diazoefficiens (strain JCM 10833 / BCRC 13528 / IAM 13628 / NBRC 14792 / USDA 110).